The primary structure comprises 128 residues: MSEKINQIVEELKTLTLLEASELVAAIEETFGVDASASTGGGVVMAVAPAAAEEVEEKTEFTVMLDEVPADKKIAVLKVVRTLTGLGLKEAKELVESTPKMVQEGLGKDAAEDAKKQIEDAGGKVSLT.

The segment at glutamine 103 to threonine 128 is disordered. Over residues leucine 106–glycine 122 the composition is skewed to basic and acidic residues.

Belongs to the bacterial ribosomal protein bL12 family. In terms of assembly, homodimer. Part of the ribosomal stalk of the 50S ribosomal subunit. Forms a multimeric L10(L12)X complex, where L10 forms an elongated spine to which 2 to 4 L12 dimers bind in a sequential fashion. Binds GTP-bound translation factors.

Its subcellular location is the plastid. It is found in the chloroplast. Functionally, forms part of the ribosomal stalk which helps the ribosome interact with GTP-bound translation factors. Is thus essential for accurate translation. The protein is Large ribosomal subunit protein bL12c of Thalassiosira pseudonana (Marine diatom).